Here is a 506-residue protein sequence, read N- to C-terminus: MTFQNVRVRVAPSPTGDPHVGTAYMALFNEVFARKFNGKMILRIEDTDQTRSRDDYEKNIFSALKWCGIRWDEGPDIGGPYGPYRQSERTEIYKKYAEILLQTDYAYKCFATPQELQEMRAVASTLGYRGGYDRRYRYLSAEEVRQREEQGQPYTIRLKVPLTGESVFEDQCKGRVVFPWADVDDQVLVKSDGFPTYHFANVVDDHLMGITHVLRGEEWLSSTPKHLLLYEAFGWEPPQFFHMPLLLNPDGSKLSKRKNPTSIFYYRDAGYKKEAFMNFLTLMGYSMEGDEEIYSMQRLIEAFDPKRIGRSGAVFDIRKLDWMNKHYLNHEGSPESLLKELKDWLWNDEFLLKILPLCQTRITTLADFIRLTSFFFMAIPEYSKEDLLPSSLGHQQAAVMLYSLVKYLEKKDLWEKDFFYQGSKWLAEAFQVHHKKAVIPLLYVTITGEKQGLPLFDSMELLGKARTRARLTHAQNLLGGVPKKLQQQIDKALQDQPLEEIRFLDF.

The short motif at 12–22 (PSPTGDPHVGT) is the 'HIGH' region element. The short motif at 253–257 (KLSKR) is the 'KMSKS' region element. Residue K256 coordinates ATP.

This sequence belongs to the class-I aminoacyl-tRNA synthetase family. Glutamate--tRNA ligase type 1 subfamily. As to quaternary structure, monomer.

It is found in the cytoplasm. The catalysed reaction is tRNA(Glu) + L-glutamate + ATP = L-glutamyl-tRNA(Glu) + AMP + diphosphate. In terms of biological role, catalyzes the attachment of glutamate to tRNA(Glu) in a two-step reaction: glutamate is first activated by ATP to form Glu-AMP and then transferred to the acceptor end of tRNA(Glu). This is Glutamate--tRNA ligase from Chlamydia muridarum (strain MoPn / Nigg).